Here is a 380-residue protein sequence, read N- to C-terminus: MAPNLRKHHPLLKMVNNSLIDLPTPSNISAWWNFGSLLGICLMTQILTGLLLAMHYTADTSLAFTSVAHTCRNVQFGWLIRNLHANGASLFFICIYLHIGRGFYYGSYLYKETWNTGVILLLTLMATAFVGYVLPWGQMSFWGATVITNLFSAIPYIGQTLVEWAWGGFSVDNPTLTRFFALHFLLPFIIAGLTLIHLTFLHETGSNNPLGISSNCDKIPFHPYFSTKDILGFIILLLPLMTLAMFAPNFLGDPENFTPANPLVTPPHIKPEWYFLFAYAILRSIPNKLGGVLALAASVLVLFLAPFLHMSKQRTMTFRPLSQLLFWTLVANLFILTWIGSQPVEHPFIITGQLASLTYFTILLILFPITGMLENKLLKL.

A run of 4 helical transmembrane segments spans residues 34 to 54, 78 to 99, 114 to 134, and 179 to 199; these read FGSL…LLAM, WLIR…YLHI, WNTG…GYVL, and FFAL…IHLT. Heme b contacts are provided by histidine 84 and histidine 98. Heme b contacts are provided by histidine 183 and histidine 197. Histidine 202 contributes to the a ubiquinone binding site. Transmembrane regions (helical) follow at residues 227 to 247, 289 to 309, 321 to 341, and 348 to 368; these read TKDI…AMFA, LGGV…PFLH, LSQL…WIGS, and FIIT…ILFP.

The protein belongs to the cytochrome b family. As to quaternary structure, the cytochrome bc1 complex contains 11 subunits: 3 respiratory subunits (MT-CYB, CYC1 and UQCRFS1), 2 core proteins (UQCRC1 and UQCRC2) and 6 low-molecular weight proteins (UQCRH/QCR6, UQCRB/QCR7, UQCRQ/QCR8, UQCR10/QCR9, UQCR11/QCR10 and a cleavage product of UQCRFS1). This cytochrome bc1 complex then forms a dimer. Requires heme b as cofactor.

Its subcellular location is the mitochondrion inner membrane. Component of the ubiquinol-cytochrome c reductase complex (complex III or cytochrome b-c1 complex) that is part of the mitochondrial respiratory chain. The b-c1 complex mediates electron transfer from ubiquinol to cytochrome c. Contributes to the generation of a proton gradient across the mitochondrial membrane that is then used for ATP synthesis. This Aphanotriccus audax (Black-billed flycatcher) protein is Cytochrome b (MT-CYB).